The chain runs to 494 residues: UPF0371 protein SPJ_0333 (494 aa).

This sequence belongs to the UPF0371 family.

The polypeptide is UPF0371 protein SPJ_0333 (Streptococcus pneumoniae (strain JJA)).